Reading from the N-terminus, the 464-residue chain is ATP synthase subunit beta (464 aa).

153–160 (GGAGVGKT) contributes to the ATP binding site.

It belongs to the ATPase alpha/beta chains family. F-type ATPases have 2 components, CF(1) - the catalytic core - and CF(0) - the membrane proton channel. CF(1) has five subunits: alpha(3), beta(3), gamma(1), delta(1), epsilon(1). CF(0) has three main subunits: a(1), b(2) and c(9-12). The alpha and beta chains form an alternating ring which encloses part of the gamma chain. CF(1) is attached to CF(0) by a central stalk formed by the gamma and epsilon chains, while a peripheral stalk is formed by the delta and b chains.

The protein localises to the cell membrane. It catalyses the reaction ATP + H2O + 4 H(+)(in) = ADP + phosphate + 5 H(+)(out). Functionally, produces ATP from ADP in the presence of a proton gradient across the membrane. The catalytic sites are hosted primarily by the beta subunits. The sequence is that of ATP synthase subunit beta from Alkaliphilus oremlandii (strain OhILAs) (Clostridium oremlandii (strain OhILAs)).